Consider the following 893-residue polypeptide: cGMP-specific 3',5'-cyclic phosphodiesterase (893 aa).

2 consecutive GAF domains span residues 21-173 (DIDV…GIGI) and 205-390 (NLEC…GLGI). The PDEase domain occupies 420–743 (GQDQTEKLIQ…RNWQDLAEKV (324 aa)). H496 serves as the catalytic Proton donor. A divalent metal cation is bound by residues H500, H536, D537, and D647. Disordered regions lie at residues 784–807 (QQSQHGGDDSHTPEHQRSGSRLSI) and 844–893 (HVSE…CALL). Basic and acidic residues-rich tracts occupy residues 789–800 (GGDDSHTPEHQR) and 844–853 (HVSEDMDDKS). Residues 864–880 (SVGRMSASSSTSSAGTV) are compositionally biased toward low complexity. A compositionally biased stretch (basic residues) spans 883 to 893 (SKKRSKLCALL). C890 is modified (cysteine methyl ester). Residue C890 is the site of S-farnesyl cysteine attachment. The propeptide at 891–893 (ALL) is removed in mature form.

This sequence belongs to the cyclic nucleotide phosphodiesterase family. Interacts with PrBP. The cofactor is a divalent metal cation.

It is found in the cell membrane. It catalyses the reaction 3',5'-cyclic GMP + H2O = GMP + H(+). Has a role regulating cGMP transport in Malpighian tubule principal cells. The polypeptide is cGMP-specific 3',5'-cyclic phosphodiesterase (Drosophila virilis (Fruit fly)).